The primary structure comprises 257 residues: Zinc transporter ZupT (257 aa).

3 helical membrane-spanning segments follow: residues 5–25 (LILT…GVLG), 32–52 (LLAF…LMEM), and 61–81 (GMSP…YFGL). Residues Asn-120 and Glu-123 each coordinate Fe(2+). Zn(2+)-binding residues include Glu-123 and His-148. Transmembrane regions (helical) follow at residues 137 to 157 (LGFG…LAVA), 171 to 191 (ILWA…AWLI), 195 to 215 (MISP…MVAL), and 236 to 256 (GVLC…TAGI). Residues Asn-149, Glu-152, and Glu-181 each coordinate Fe(2+). Zn(2+) is bound at residue Glu-152.

This sequence belongs to the ZIP transporter (TC 2.A.5) family. ZupT subfamily.

Its subcellular location is the cell inner membrane. It catalyses the reaction Zn(2+)(in) = Zn(2+)(out). In terms of biological role, mediates zinc uptake. May also transport other divalent cations. The polypeptide is Zinc transporter ZupT (Escherichia coli O127:H6 (strain E2348/69 / EPEC)).